The sequence spans 197 residues: Nucleoid occlusion factor SlmA (197 aa).

The 61-residue stretch at 7–67 folds into the HTH tetR-type domain; it reads INRREHILQC…GLIDFIEESL (61 aa). The H-T-H motif DNA-binding region spans 30–49; sequence TTAKLAAEVGVSEAALYRHF.

The protein belongs to the nucleoid occlusion factor SlmA family. In terms of assembly, homodimer. Interacts with FtsZ.

It localises to the cytoplasm. The protein resides in the nucleoid. Required for nucleoid occlusion (NO) phenomenon, which prevents Z-ring formation and cell division over the nucleoid. Acts as a DNA-associated cell division inhibitor that binds simultaneously chromosomal DNA and FtsZ, and disrupts the assembly of FtsZ polymers. SlmA-DNA-binding sequences (SBS) are dispersed on non-Ter regions of the chromosome, preventing FtsZ polymerization at these regions. This chain is Nucleoid occlusion factor SlmA, found in Shewanella woodyi (strain ATCC 51908 / MS32).